The primary structure comprises 211 residues: SsrA-binding protein (211 aa).

Disordered regions lie at residues 1–20 and 170–211; these read MHRR…PERS and RLRR…RHEN. Positions 177–187 are enriched in polar residues; sequence QRNTQRSVTPR.

The protein belongs to the SmpB family.

Its subcellular location is the cytoplasm. In terms of biological role, required for rescue of stalled ribosomes mediated by trans-translation. Binds to transfer-messenger RNA (tmRNA), required for stable association of tmRNA with ribosomes. tmRNA and SmpB together mimic tRNA shape, replacing the anticodon stem-loop with SmpB. tmRNA is encoded by the ssrA gene; the 2 termini fold to resemble tRNA(Ala) and it encodes a 'tag peptide', a short internal open reading frame. During trans-translation Ala-aminoacylated tmRNA acts like a tRNA, entering the A-site of stalled ribosomes, displacing the stalled mRNA. The ribosome then switches to translate the ORF on the tmRNA; the nascent peptide is terminated with the 'tag peptide' encoded by the tmRNA and targeted for degradation. The ribosome is freed to recommence translation, which seems to be the essential function of trans-translation. This Tropheryma whipplei (strain TW08/27) (Whipple's bacillus) protein is SsrA-binding protein.